A 248-amino-acid chain; its full sequence is 2-C-methyl-D-erythritol 4-phosphate cytidylyltransferase (248 aa).

This sequence belongs to the IspD/TarI cytidylyltransferase family. IspD subfamily.

The catalysed reaction is 2-C-methyl-D-erythritol 4-phosphate + CTP + H(+) = 4-CDP-2-C-methyl-D-erythritol + diphosphate. The protein operates within isoprenoid biosynthesis; isopentenyl diphosphate biosynthesis via DXP pathway; isopentenyl diphosphate from 1-deoxy-D-xylulose 5-phosphate: step 2/6. Functionally, catalyzes the formation of 4-diphosphocytidyl-2-C-methyl-D-erythritol from CTP and 2-C-methyl-D-erythritol 4-phosphate (MEP). The protein is 2-C-methyl-D-erythritol 4-phosphate cytidylyltransferase of Corynebacterium efficiens (strain DSM 44549 / YS-314 / AJ 12310 / JCM 11189 / NBRC 100395).